We begin with the raw amino-acid sequence, 512 residues long: ATP synthase subunit alpha (512 aa).

Residue 169 to 176 coordinates ATP; that stretch reads GDRQTGKT.

It belongs to the ATPase alpha/beta chains family. In terms of assembly, F-type ATPases have 2 components, CF(1) - the catalytic core - and CF(0) - the membrane proton channel. CF(1) has five subunits: alpha(3), beta(3), gamma(1), delta(1), epsilon(1). CF(0) has four main subunits: a(1), b(1), b'(1) and c(9-12).

Its subcellular location is the cell inner membrane. It catalyses the reaction ATP + H2O + 4 H(+)(in) = ADP + phosphate + 5 H(+)(out). Produces ATP from ADP in the presence of a proton gradient across the membrane. The alpha chain is a regulatory subunit. This is ATP synthase subunit alpha from Cereibacter sphaeroides (strain ATCC 17025 / ATH 2.4.3) (Rhodobacter sphaeroides).